We begin with the raw amino-acid sequence, 108 residues long: UPF0102 protein Shewmr4_3685 (108 aa).

It belongs to the UPF0102 family.

This chain is UPF0102 protein Shewmr4_3685, found in Shewanella sp. (strain MR-4).